A 439-amino-acid chain; its full sequence is tRNA modification GTPase MnmE (439 aa).

Residues Arg20, Glu78, and Lys116 each contribute to the (6S)-5-formyl-5,6,7,8-tetrahydrofolate site. The TrmE-type G domain maps to 211 to 364 (GIYVTILGEP…LLNLIKQKVE (154 aa)). GTP is bound by residues 221–226 (NSGKST), 240–246 (SEYAGTT), and 265–268 (DTAG). Mg(2+) contacts are provided by Ser225 and Thr246. Lys439 contributes to the (6S)-5-formyl-5,6,7,8-tetrahydrofolate binding site.

This sequence belongs to the TRAFAC class TrmE-Era-EngA-EngB-Septin-like GTPase superfamily. TrmE GTPase family. Homodimer. Heterotetramer of two MnmE and two MnmG subunits. It depends on K(+) as a cofactor.

Its subcellular location is the cytoplasm. Exhibits a very high intrinsic GTPase hydrolysis rate. Involved in the addition of a carboxymethylaminomethyl (cmnm) group at the wobble position (U34) of certain tRNAs, forming tRNA-cmnm(5)s(2)U34. The protein is tRNA modification GTPase MnmE of Ehrlichia chaffeensis (strain ATCC CRL-10679 / Arkansas).